The sequence spans 889 residues: DNA-directed RNA polymerase subunit Rpo1N (889 aa).

Zn(2+) contacts are provided by cysteine 62, cysteine 65, cysteine 72, histidine 75, cysteine 102, cysteine 105, cysteine 149, and cysteine 152. 3 residues coordinate Mg(2+): aspartate 466, aspartate 468, and aspartate 470.

Belongs to the RNA polymerase beta' chain family. As to quaternary structure, part of the RNA polymerase complex. The cofactor is Mg(2+). It depends on Zn(2+) as a cofactor.

It is found in the cytoplasm. The enzyme catalyses RNA(n) + a ribonucleoside 5'-triphosphate = RNA(n+1) + diphosphate. Functionally, DNA-dependent RNA polymerase (RNAP) catalyzes the transcription of DNA into RNA using the four ribonucleoside triphosphates as substrates. Forms the clamp head domain. This is DNA-directed RNA polymerase subunit Rpo1N from Methanococcus vannielii (strain ATCC 35089 / DSM 1224 / JCM 13029 / OCM 148 / SB).